The primary structure comprises 86 residues: YcgL domain-containing protein XCV4171 (86 aa).

The 83-residue stretch at 1 to 83 (MHAYVYKSQR…PKTIVLAGEC (83 aa)) folds into the YcgL domain.

This is YcgL domain-containing protein XCV4171 from Xanthomonas euvesicatoria pv. vesicatoria (strain 85-10) (Xanthomonas campestris pv. vesicatoria).